Reading from the N-terminus, the 374-residue chain is Methionine import ATP-binding protein MetN 2 (374 aa).

The tract at residues 1 to 22 (MSVATLQRKLPEAAPRRAGQTE) is disordered. In terms of domain architecture, ABC transporter spans 32–271 (VRFIGLGKTY…PQHEVSKTLL (240 aa)). Residue 68–75 (GRSGAGKS) participates in ATP binding.

It belongs to the ABC transporter superfamily. Methionine importer (TC 3.A.1.24) family. In terms of assembly, the complex is composed of two ATP-binding proteins (MetN), two transmembrane proteins (MetI) and a solute-binding protein (MetQ).

It is found in the cell inner membrane. The enzyme catalyses L-methionine(out) + ATP + H2O = L-methionine(in) + ADP + phosphate + H(+). It catalyses the reaction D-methionine(out) + ATP + H2O = D-methionine(in) + ADP + phosphate + H(+). In terms of biological role, part of the ABC transporter complex MetNIQ involved in methionine import. Responsible for energy coupling to the transport system. This Pseudomonas fluorescens (strain ATCC BAA-477 / NRRL B-23932 / Pf-5) protein is Methionine import ATP-binding protein MetN 2.